The chain runs to 313 residues: GTP cyclohydrolase 1 (313 aa).

Residues 1 to 10 (MAQETTRDGS) show a composition bias toward basic and acidic residues. The tract at residues 1–120 (MAQETTRDGS…SRGTRERLEE (120 aa)) is disordered. Low complexity predominate over residues 11-20 (DSPSGSVSPP). Over residues 29–39 (KDKKSSKKRAH) the composition is skewed to basic residues. Residues 40–64 (SSGERRSSVSKPARDPSDKPEESPS) are compositionally biased toward basic and acidic residues. The span at 72 to 102 (TSSTAAAAVPSTITEEVSPSTSVTRSPSPVI) shows a compositional bias: low complexity. Cys-202, His-205, and Cys-273 together coordinate Zn(2+).

It belongs to the GTP cyclohydrolase I family. As to quaternary structure, toroid-shaped homodecamer, composed of two pentamers of five dimers.

The catalysed reaction is GTP + H2O = 7,8-dihydroneopterin 3'-triphosphate + formate + H(+). Its pathway is cofactor biosynthesis; 7,8-dihydroneopterin triphosphate biosynthesis; 7,8-dihydroneopterin triphosphate from GTP: step 1/1. With respect to regulation, GTP shows a positive allosteric effect, and tetrahydrobiopterin inhibits the enzyme activity. In terms of biological role, GTP cyclohydrolase 1 is the first enzyme in the biosynthetic pathway leading to folic acid. In Neurospora crassa (strain ATCC 24698 / 74-OR23-1A / CBS 708.71 / DSM 1257 / FGSC 987), this protein is GTP cyclohydrolase 1 (gch-1).